Here is a 558-residue protein sequence, read N- to C-terminus: Laccase-4 (558 aa).

An N-terminal signal peptide occupies residues 1–24; it reads MGSHMVWFLFLVSFFSVFPAPSES. 2 Plastocyanin-like domains span residues 32–148 and 158–308; these read NVVM…PKRG and NEKV…YSGT. N-linked (GlcNAc...) asparagine glycosylation is found at asparagine 37 and asparagine 78. Residues histidine 82 and histidine 84 each contribute to the Cu cation site. Asparagine 114 carries N-linked (GlcNAc...) asparagine glycosylation. Positions 127 and 129 each coordinate Cu cation. Residues asparagine 187, asparagine 296, asparagine 323, asparagine 330, asparagine 373, asparagine 383, asparagine 400, asparagine 418, and asparagine 441 are each glycosylated (N-linked (GlcNAc...) asparagine). In terms of domain architecture, Plastocyanin-like 3 spans 408-542; the sequence is DFPKNPPHVF…KMAFLVENGK (135 aa). The Cu cation site is built by histidine 459, histidine 462, and histidine 464. An N-linked (GlcNAc...) asparagine glycan is attached at asparagine 479. Residues histidine 521, cysteine 522, histidine 523, and histidine 527 each coordinate Cu cation. The N-linked (GlcNAc...) asparagine glycan is linked to asparagine 545.

This sequence belongs to the multicopper oxidase family. Requires Cu cation as cofactor. As to expression, ubiquitous, with higher levels in the inflorescence stem.

Its subcellular location is the secreted. It localises to the extracellular space. The protein resides in the apoplast. The enzyme catalyses 4 hydroquinone + O2 = 4 benzosemiquinone + 2 H2O. Its function is as follows. Lignin degradation and detoxification of lignin-derived products. Required for secondary xylem cell wall lignification. This is Laccase-4 (IRX12) from Arabidopsis thaliana (Mouse-ear cress).